The primary structure comprises 291 residues: Quinol oxidase subunit 2 (291 aa).

The N-terminal stretch at 1-28 (MQLKKAFWKLASLLPLSLLLFLGGCDKK) is a signal peptide. The next 2 helical transmembrane spans lie at 49–69 (SFLL…VILI) and 91–111 (LEII…IPTV).

This sequence belongs to the cytochrome c oxidase subunit 2 family.

It is found in the cell membrane. It catalyses the reaction 2 a quinol + O2 = 2 a quinone + 2 H2O. Its function is as follows. Catalyzes quinol oxidation with the concomitant reduction of oxygen to water. Subunit II transfers the electrons from a quinol to the binuclear center of the catalytic subunit I. The protein is Quinol oxidase subunit 2 of Bacillus cereus (strain ATCC 14579 / DSM 31 / CCUG 7414 / JCM 2152 / NBRC 15305 / NCIMB 9373 / NCTC 2599 / NRRL B-3711).